The following is a 249-amino-acid chain: Aquaporin TIP4-1 (249 aa).

Residue M1 is modified to N-acetylmethionine. Residues 1 to 20 (MKKIELGHHSEAAKPDCIKA) are Cytoplasmic-facing. K3 bears the N6,N6-dimethyllysine mark. Residues 21-41 (LIVEFITTFLFVFAGVGSAMA) form a helical membrane-spanning segment. Residues 42–49 (TDSLVGNT) are Vacuolar-facing. The chain crosses the membrane as a helical span at residues 50–70 (LVGLFAVAVAHAFVVAVMISA). Over 71–105 (GHISGGHLNPAVTLGLLLGGHISVFRAFLYWIDQL) the chain is Cytoplasmic. The NPA 1 signature appears at 79–81 (NPA). A helical transmembrane segment spans residues 106-126 (LASSAACFLLSYLTGGMGTPV). The Vacuolar segment spans residues 127–137 (HTLASGVSYTQ). Residues 138–158 (GIIWEIILTFSLLFTVYATIV) traverse the membrane as a helical segment. Residues 159 to 166 (DPKKGSLD) are Cytoplasmic-facing. A helical membrane pass occupies residues 167-187 (GFGPLLTGFVVGANILAGGAF). The Vacuolar segment spans residues 188 to 212 (SGASMNPARSFGPALVSGNWTDHWV). Residues 193-195 (NPA) carry the NPA 2 motif. A helical transmembrane segment spans residues 213-233 (YWVGPLIGGGLAGFIYENVLI). Residues 234–249 (DRPHVPVADDEQPLLN) are Cytoplasmic-facing.

Belongs to the MIP/aquaporin (TC 1.A.8) family. TIP (TC 1.A.8.10) subfamily. In terms of tissue distribution, expressed in roots.

Its subcellular location is the vacuole membrane. In terms of biological role, aquaporins facilitate the transport of water and small neutral solutes across cell membranes. Transports urea in yeast cells in a pH-independent manner. This Arabidopsis thaliana (Mouse-ear cress) protein is Aquaporin TIP4-1 (TIP4-1).